We begin with the raw amino-acid sequence, 1125 residues long: Speract receptor (1125 aa).

An N-terminal signal peptide occupies residues 1–21 (MAHARHLFLFMVAFTITMVIA). Topologically, residues 22–510 (RLDFNPTIIN…GELCTNWALY (489 aa)) are extracellular. Residues asparagine 185 and asparagine 409 are each glycosylated (N-linked (GlcNAc...) asparagine). Residues 511–531 (LGASIPTFLIIFGGLIGFFIY) traverse the membrane as a helical segment. Residues 532-1125 (RKRAYEAALD…AANRVIPDDV (594 aa)) lie on the Cytoplasmic side of the membrane. The region spanning 571-839 (MSAISVISNA…PNIMAVRTML (269 aa)) is the Protein kinase domain. Positions 914 to 1044 (SIFFSDIVGF…DTVNTASRME (131 aa)) constitute a Guanylate cyclase domain.

Belongs to the adenylyl cyclase class-4/guanylyl cyclase family.

Its subcellular location is the membrane. The enzyme catalyses GTP = 3',5'-cyclic GMP + diphosphate. Functionally, implicated as a cell-surface receptor on spermatozoa for 'speract' a chemotactic peptide, and on various other cells as a receptor for atrial natriuretic peptide. The chain is Speract receptor from Strongylocentrotus purpuratus (Purple sea urchin).